The sequence spans 129 residues: Phosphoribosyl-AMP cyclohydrolase (129 aa).

Residue Asp79 coordinates Mg(2+). Cys80 contributes to the Zn(2+) binding site. Positions 81 and 83 each coordinate Mg(2+). Zn(2+)-binding residues include Cys96 and Cys103.

It belongs to the PRA-CH family. Homodimer. Requires Mg(2+) as cofactor. The cofactor is Zn(2+).

It is found in the cytoplasm. The enzyme catalyses 1-(5-phospho-beta-D-ribosyl)-5'-AMP + H2O = 1-(5-phospho-beta-D-ribosyl)-5-[(5-phospho-beta-D-ribosylamino)methylideneamino]imidazole-4-carboxamide. It participates in amino-acid biosynthesis; L-histidine biosynthesis; L-histidine from 5-phospho-alpha-D-ribose 1-diphosphate: step 3/9. In terms of biological role, catalyzes the hydrolysis of the adenine ring of phosphoribosyl-AMP. The polypeptide is Phosphoribosyl-AMP cyclohydrolase (Magnetococcus marinus (strain ATCC BAA-1437 / JCM 17883 / MC-1)).